A 142-amino-acid polypeptide reads, in one-letter code: Large ribosomal subunit protein uL24 (142 aa).

The segment covering 1 to 11 (MKVNPFVSSDS) has biased composition (polar residues). A disordered region spans residues 1–24 (MKVNPFVSSDSGKSRKAHFNAPSH).

Belongs to the universal ribosomal protein uL24 family.

The chain is Large ribosomal subunit protein uL24 (rpl-26) from Caenorhabditis elegans.